A 368-amino-acid polypeptide reads, in one-letter code: Probable magnesium transporter NIPA3 (368 aa).

Residues 1–18 are Extracellular-facing; that stretch reads MASLSGSWRDAYKGMSSD. A helical transmembrane segment spans residues 19–39; sequence NIKGLVLALSSSLFIGASFIV. Residues 40 to 66 lie on the Cytoplasmic side of the membrane; it reads KKKGLKRAGASGLRAGSGGYSYLLEPL. The helical transmembrane segment at 67–87 threads the bilayer; that stretch reads WWVGMITMIVGEIANFAAYAF. The Extracellular segment spans residues 88-90; sequence APA. A helical membrane pass occupies residues 91–111; that stretch reads ILVTPLGALSIIISAALAHVI. The Cytoplasmic segment spans residues 112–115; it reads LHEK. Residues 116 to 136 form a helical membrane-spanning segment; it reads LHTFGLLGCVLCVVGSITIVL. Over 137-157 the chain is Extracellular; it reads HAPQEQEIDSVLQVWNLATEP. The helical transmembrane segment at 158–178 threads the bilayer; it reads AFLLYAAAVVGAAIILIVQFV. Residues 179-189 lie on the Cytoplasmic side of the membrane; sequence PQYGQSHVMVY. A helical transmembrane segment spans residues 190–210; sequence IGVCSLVGSLSVMSVKALGIA. Over 211–220 the chain is Extracellular; that stretch reads LKLTFSGMNQ. Residues 221-241 form a helical membrane-spanning segment; it reads LIYPQTWVFTLIVLTCVITQM. Over 242–255 the chain is Cytoplasmic; sequence NYLNKALDTFNTAV. A helical membrane pass occupies residues 256–276; sequence VSPIYYVMFTSLTILASVIMF. The Extracellular segment spans residues 277–283; it reads KDWDRQD. The chain crosses the membrane as a helical span at residues 284-304; it reads GTQIVTELCGFVTILSGTFLL. Topologically, residues 305–368 are cytoplasmic; that stretch reads HKTKDMVDGS…ILPQDGPEAV (64 aa).

This sequence belongs to the NIPA (TC 2.A.7) family. As to quaternary structure, homodimer.

It is found in the cell membrane. The protein localises to the early endosome. Functionally, acts as a Mg(2+) transporter. Can also transport other divalent cations such as Fe(2+), Sr(2+), Ba(2+), Mn(2+) and Co(2+) but to a much less extent than Mg(2+). In Arabidopsis thaliana (Mouse-ear cress), this protein is Probable magnesium transporter NIPA3.